Here is a 704-residue protein sequence, read N- to C-terminus: Elongation factor G 1 (704 aa).

Residues 8–291 (ERYRNIGISA…AVIDYLPSPA (284 aa)) form the tr-type G domain. Residues 17–24 (AHIDAGKT), 88–92 (DTPGH), and 142–145 (NKMD) contribute to the GTP site.

It belongs to the TRAFAC class translation factor GTPase superfamily. Classic translation factor GTPase family. EF-G/EF-2 subfamily.

It is found in the cytoplasm. Catalyzes the GTP-dependent ribosomal translocation step during translation elongation. During this step, the ribosome changes from the pre-translocational (PRE) to the post-translocational (POST) state as the newly formed A-site-bound peptidyl-tRNA and P-site-bound deacylated tRNA move to the P and E sites, respectively. Catalyzes the coordinated movement of the two tRNA molecules, the mRNA and conformational changes in the ribosome. This Burkholderia mallei (strain ATCC 23344) protein is Elongation factor G 1.